The chain runs to 242 residues: Small ribosomal subunit protein uS2 (242 aa).

The protein belongs to the universal ribosomal protein uS2 family.

This Shewanella denitrificans (strain OS217 / ATCC BAA-1090 / DSM 15013) protein is Small ribosomal subunit protein uS2.